Consider the following 47-residue polypeptide: Large ribosomal subunit protein bL33 (47 aa).

Belongs to the bacterial ribosomal protein bL33 family.

The polypeptide is Large ribosomal subunit protein bL33 (Staphylococcus capitis).